The chain runs to 160 residues: Peptidyl-prolyl cis-trans isomerase CYP18-1 (160 aa).

One can recognise a PPIase cyclophilin-type domain in the interval 3-153 (VTLHTNLGDI…AEIRLNRVTI (151 aa)).

It belongs to the cyclophilin-type PPIase family. In terms of tissue distribution, ubiquitous.

The protein resides in the cytoplasm. It catalyses the reaction [protein]-peptidylproline (omega=180) = [protein]-peptidylproline (omega=0). PPIases accelerate the folding of proteins. It catalyzes the cis-trans isomerization of proline imidic peptide bonds in oligopeptides. The sequence is that of Peptidyl-prolyl cis-trans isomerase CYP18-1 (CYP18-1) from Arabidopsis thaliana (Mouse-ear cress).